A 313-amino-acid chain; its full sequence is Homoserine O-acetyltransferase (313 aa).

The Acyl-thioester intermediate role is filled by cysteine 142. Substrate contacts are provided by lysine 163 and serine 191. Histidine 234 functions as the Proton acceptor in the catalytic mechanism. Residue glutamate 236 is part of the active site. Arginine 248 lines the substrate pocket.

This sequence belongs to the MetA family.

It is found in the cytoplasm. The catalysed reaction is L-homoserine + acetyl-CoA = O-acetyl-L-homoserine + CoA. The protein operates within amino-acid biosynthesis; L-methionine biosynthesis via de novo pathway; O-acetyl-L-homoserine from L-homoserine: step 1/1. In terms of biological role, transfers an acetyl group from acetyl-CoA to L-homoserine, forming acetyl-L-homoserine. The polypeptide is Homoserine O-acetyltransferase (Streptococcus gordonii (strain Challis / ATCC 35105 / BCRC 15272 / CH1 / DL1 / V288)).